A 259-amino-acid polypeptide reads, in one-letter code: MILERIVTDNLPDLERRKMRLPLAKLQELVLDIPYPPIDMAMKLKGRQVRLIAEVKKASPSKGIIRPDFDPVDIAGIYARNGASAISVLTEEHHFMGSLDNLKKIRESGVASKLPLLRKDFIHDPYQVYESRLYGADAILLIVAMLSPERLQELLSLSHKLGMKCLVEVHTRSELEIALESNARIIGLNNRDLHTFKIDLTVTERLRPLIPPECIVVSESGIQTRADISRLEELGVDAVLVGEALTASVDIAAKMRKLL.

Belongs to the TrpC family.

The enzyme catalyses 1-(2-carboxyphenylamino)-1-deoxy-D-ribulose 5-phosphate + H(+) = (1S,2R)-1-C-(indol-3-yl)glycerol 3-phosphate + CO2 + H2O. The protein operates within amino-acid biosynthesis; L-tryptophan biosynthesis; L-tryptophan from chorismate: step 4/5. This is Indole-3-glycerol phosphate synthase from Dehalococcoides mccartyi (strain ATCC BAA-2100 / JCM 16839 / KCTC 5957 / BAV1).